The chain runs to 196 residues: Holliday junction branch migration complex subunit RuvA (196 aa).

A domain I region spans residues methionine 1 to leucine 63. The tract at residues asparagine 64 to serine 139 is domain II. Residue serine 139 is a region of interest, flexible linker. The segment at serine 139 to asparagine 196 is domain III.

Belongs to the RuvA family. In terms of assembly, homotetramer. Forms an RuvA(8)-RuvB(12)-Holliday junction (HJ) complex. HJ DNA is sandwiched between 2 RuvA tetramers; dsDNA enters through RuvA and exits via RuvB. An RuvB hexamer assembles on each DNA strand where it exits the tetramer. Each RuvB hexamer is contacted by two RuvA subunits (via domain III) on 2 adjacent RuvB subunits; this complex drives branch migration. In the full resolvosome a probable DNA-RuvA(4)-RuvB(12)-RuvC(2) complex forms which resolves the HJ.

It is found in the cytoplasm. The RuvA-RuvB-RuvC complex processes Holliday junction (HJ) DNA during genetic recombination and DNA repair, while the RuvA-RuvB complex plays an important role in the rescue of blocked DNA replication forks via replication fork reversal (RFR). RuvA specifically binds to HJ cruciform DNA, conferring on it an open structure. The RuvB hexamer acts as an ATP-dependent pump, pulling dsDNA into and through the RuvAB complex. HJ branch migration allows RuvC to scan DNA until it finds its consensus sequence, where it cleaves and resolves the cruciform DNA. The sequence is that of Holliday junction branch migration complex subunit RuvA from Borrelia garinii subsp. bavariensis (strain ATCC BAA-2496 / DSM 23469 / PBi) (Borreliella bavariensis).